The following is a 1204-amino-acid chain: ATP-dependent helicase/nuclease subunit A (1204 aa).

Positions 2-469 (TNFTKEQDQA…IILADNFRST (468 aa)) constitute a UvrD-like helicase ATP-binding domain. Residue 23 to 30 (ASAGSGKT) participates in ATP binding. In terms of domain architecture, UvrD-like helicase C-terminal spans 497-784 (GQLQFGASYY…KLMTIHASKG (288 aa)).

This sequence belongs to the helicase family. AddA subfamily. As to quaternary structure, heterodimer of AddA and AddB/RexB. Mg(2+) serves as cofactor.

The catalysed reaction is Couples ATP hydrolysis with the unwinding of duplex DNA by translocating in the 3'-5' direction.. It catalyses the reaction ATP + H2O = ADP + phosphate + H(+). The heterodimer acts as both an ATP-dependent DNA helicase and an ATP-dependent, dual-direction single-stranded exonuclease. Recognizes the chi site generating a DNA molecule suitable for the initiation of homologous recombination. The AddA nuclease domain is required for chi fragment generation; this subunit has the helicase and 3' -&gt; 5' nuclease activities. This is ATP-dependent helicase/nuclease subunit A from Lactobacillus gasseri (strain ATCC 33323 / DSM 20243 / BCRC 14619 / CIP 102991 / JCM 1131 / KCTC 3163 / NCIMB 11718 / NCTC 13722 / AM63).